Reading from the N-terminus, the 417-residue chain is Calreticulin (417 aa).

Residues 1–17 (MLLPVPLLLGLVGLAAA) form the signal peptide. The interval 18–197 (EPTIYFKEQF…NSQVESGSLE (180 aa)) is N-domain. Ca(2+)-binding residues include glutamine 26, lysine 62, and lysine 64. The residue at position 64 (lysine 64) is an N6-(2-hydroxyisobutyryl)lysine. The an alpha-D-glucoside site is built by tyrosine 109, lysine 111, tyrosine 128, and aspartate 135. A disulfide bridge connects residues cysteine 137 and cysteine 163. Lysine 159 carries the N6-acetyllysine modification. One copy of the 1-1 repeat lies at 191-202 (VESGSLEDDWDF). Residues 191 to 255 (VESGSLEDDW…DAKKPEDWDE (65 aa)) are 4 X approximate repeats. The segment at 193–277 (SGSLEDDWDF…NPEYKGEWKP (85 aa)) is disordered. Residues 198-308 (DDWDFLPPKK…YSPDSNIYAY (111 aa)) are P-domain. Positions 207–251 (KIKDPDAVKPEDWDERAKIDDPTDSKPEDWDKPEHIPDPDAKKPE) are enriched in basic and acidic residues. Position 209 is an N6-acetyllysine (lysine 209). 6 consecutive repeat copies span residues 210–221 (DPDAVKPEDWDE), 227–238 (DPTDSKPEDWDK), 244–255 (DPDAKKPEDWDE), 259–269 (GEWEPPVIQNP), 273–283 (GEWKPRQIDNP), and 287–297 (GTWIHPEIDNP). An interaction with PPIB region spans residues 237 to 270 (DKPEHIPDPDAKKPEDWDEEMDGEWEPPVIQNPE). A compositionally biased stretch (acidic residues) spans 252 to 261 (DWDEEMDGEW). A 3 X approximate repeats region spans residues 259 to 297 (GEWEPPVIQNPEYKGEWKPRQIDNPDYKGTWIHPEIDNP). Residues 309–417 (ENFAVLGLDL…AAAGQAKDEL (109 aa)) form a C-domain region. Aspartate 317 contributes to the an alpha-D-glucoside binding site. Aspartate 328 contacts Ca(2+). Positions 350-417 (TKAAEKQMKD…AAAGQAKDEL (68 aa)) are disordered. Over residues 352–379 (AAEKQMKDKQDEEQRLKEEEEEKKRKEE) the composition is skewed to basic and acidic residues. The span at 380-408 (EEVDKEDEEDKDEDEEEEDEKEEEEEEDA) shows a compositional bias: acidic residues. Residues 414–417 (KDEL) carry the Prevents secretion from ER motif.

The protein belongs to the calreticulin family. As to quaternary structure, monomer. Component of an EIF2 complex at least composed of CELF1/CUGBP1, CALR, CALR3, EIF2S1, EIF2S2, HSP90B1 and HSPA5. Interacts with PDIA3/ERp57 and SPACA9. Interacts with TRIM21. Interacts with NR3C1. Interacts with PPIB. Interacts (via P-domain) with PDIA5. Interacts with CLCC1. In blastocyst expressed in all blastomeres (at protein level). In embryos, expressed in spleen, kidney, liver, fat, muscle, ovary, granulosa cells and cumulus cells.

Its subcellular location is the endoplasmic reticulum lumen. The protein resides in the cytoplasm. It is found in the cytosol. It localises to the secreted. The protein localises to the extracellular space. Its subcellular location is the extracellular matrix. The protein resides in the cell surface. It is found in the sarcoplasmic reticulum lumen. It localises to the cytoplasmic vesicle. The protein localises to the secretory vesicle. Its subcellular location is the cortical granule. The protein resides in the cytolytic granule. Calcium-binding chaperone that promotes folding, oligomeric assembly and quality control in the endoplasmic reticulum (ER) via the calreticulin/calnexin cycle. This lectin interacts transiently with almost all of the monoglucosylated glycoproteins that are synthesized in the ER. Interacts with the DNA-binding domain of NR3C1 and mediates its nuclear export. Involved in maternal gene expression regulation. May participate in oocyte maturation via the regulation of calcium homeostasis. Present in the cortical granules of non-activated oocytes, is exocytosed during the cortical reaction in response to oocyte activation and might participate in the block to polyspermy. This Sus scrofa (Pig) protein is Calreticulin (CALR).